A 279-amino-acid polypeptide reads, in one-letter code: HTH-type transcriptional regulator HdfR (279 aa).

The HTH lysR-type domain maps to 1 to 58; that stretch reads MDTELLKTFLEVSRTRHFGRAAESLYLTQSAVSFRIRQLENQLGVNLFTRHRNNIRLT. Positions 18-37 form a DNA-binding region, H-T-H motif; that stretch reads FGRAAESLYLTQSAVSFRIR.

Belongs to the LysR transcriptional regulatory family.

Functionally, negatively regulates the transcription of the flagellar master operon flhDC by binding to the upstream region of the operon. In Escherichia coli O6:K15:H31 (strain 536 / UPEC), this protein is HTH-type transcriptional regulator HdfR.